A 348-amino-acid chain; its full sequence is Fe(3+) ions import ATP-binding protein FbpC (348 aa).

The region spanning 7–237 is the ABC transporter domain; sequence VELRNVTKRF…PASRFMASFM (231 aa). An ATP-binding site is contributed by 39 to 46; it reads GPSGCGKT.

This sequence belongs to the ABC transporter superfamily. Fe(3+) ion importer (TC 3.A.1.10) family. In terms of assembly, the complex is composed of two ATP-binding proteins (FbpC), two transmembrane proteins (FbpB) and a solute-binding protein (FbpA).

Its subcellular location is the cell inner membrane. The enzyme catalyses Fe(3+)(out) + ATP + H2O = Fe(3+)(in) + ADP + phosphate + H(+). Part of the ABC transporter complex FbpABC involved in Fe(3+) ions import. Responsible for energy coupling to the transport system. The polypeptide is Fe(3+) ions import ATP-binding protein FbpC (Escherichia coli O157:H7).